The primary structure comprises 499 residues: ADP,ATP carrier protein 5 (499 aa).

The next 11 membrane-spanning stretches (helical) occupy residues 25 to 45 (LGKF…QNIL), 61 to 81 (IAGF…VIIY), 93 to 113 (IFYY…FVIY), 148 to 168 (YIVY…LLFW), 183 to 203 (FYTF…FLMM), 223 to 243 (ITLV…CCVL), 286 to 306 (LWLL…VEAV), 327 to 347 (LYIL…NNVM), 356 to 376 (AVIS…LIVF), 380 to 400 (ILSL…VSIG), and 468 to 488 (SISP…IYAV).

The protein belongs to the ADP/ATP translocase tlc family.

Its subcellular location is the cell membrane. Provides the rickettsial cell with host ATP in exchange for rickettsial ADP. This is an obligate exchange system. This energy acquiring activity is an important component of rickettsial parasitism. This Rickettsia felis (strain ATCC VR-1525 / URRWXCal2) (Rickettsia azadi) protein is ADP,ATP carrier protein 5 (tlcE).